The following is a 93-amino-acid chain: Sec-independent protein translocase protein TatA (93 aa).

Residues methionine 1–glycine 21 form a helical membrane-spanning segment. Positions methionine 43–serine 93 are disordered. Residues proline 52 to glutamine 65 show a composition bias toward pro residues. The segment covering lysine 84 to serine 93 has biased composition (basic and acidic residues).

This sequence belongs to the TatA/E family. As to quaternary structure, the Tat system comprises two distinct complexes: a TatABC complex, containing multiple copies of TatA, TatB and TatC subunits, and a separate TatA complex, containing only TatA subunits. Substrates initially bind to the TatABC complex, which probably triggers association of the separate TatA complex to form the active translocon.

The protein localises to the cell inner membrane. Its function is as follows. Part of the twin-arginine translocation (Tat) system that transports large folded proteins containing a characteristic twin-arginine motif in their signal peptide across membranes. TatA could form the protein-conducting channel of the Tat system. The protein is Sec-independent protein translocase protein TatA of Pseudomonas fluorescens (strain ATCC BAA-477 / NRRL B-23932 / Pf-5).